Here is a 179-residue protein sequence, read N- to C-terminus: Deoxyuridine 5'-triphosphate nucleotidohydrolase, mitochondrial (179 aa).

The N-terminal 41 residues, 1 to 41, are a transit peptide targeting the mitochondrion; it reads MPIEQKYFSLFSNLFKRLTTNNNNNNYLKMAPPNFETFKVK. Residues 97 to 99, 111 to 114, Gly122, Arg165, and 170 to 171 each bind dUTP; these read RSG, GVID, and FG.

It belongs to the dUTPase family. In terms of assembly, homotrimer. Mg(2+) is required as a cofactor.

The protein localises to the mitochondrion. It carries out the reaction dUTP + H2O = dUMP + diphosphate + H(+). Its pathway is pyrimidine metabolism; dUMP biosynthesis; dUMP from dCTP (dUTP route): step 2/2. Its function is as follows. This enzyme is involved in nucleotide metabolism: it produces dUMP, the immediate precursor of thymidine nucleotides and it decreases the intracellular concentration of dUTP so that uracil cannot be incorporated into DNA. The sequence is that of Deoxyuridine 5'-triphosphate nucleotidohydrolase, mitochondrial (dut) from Dictyostelium discoideum (Social amoeba).